We begin with the raw amino-acid sequence, 156 residues long: Lipoprotein signal peptidase (156 aa).

A run of 3 helical transmembrane segments spans residues V37–L57, F68–E88, and I95–Y115. Residues D120 and D138 contribute to the active site. Residues A133 to Y153 traverse the membrane as a helical segment.

It belongs to the peptidase A8 family.

It is found in the cell inner membrane. The enzyme catalyses Release of signal peptides from bacterial membrane prolipoproteins. Hydrolyzes -Xaa-Yaa-Zaa-|-(S,diacylglyceryl)Cys-, in which Xaa is hydrophobic (preferably Leu), and Yaa (Ala or Ser) and Zaa (Gly or Ala) have small, neutral side chains.. It functions in the pathway protein modification; lipoprotein biosynthesis (signal peptide cleavage). In terms of biological role, this protein specifically catalyzes the removal of signal peptides from prolipoproteins. The protein is Lipoprotein signal peptidase of Maridesulfovibrio salexigens (strain ATCC 14822 / DSM 2638 / NCIMB 8403 / VKM B-1763) (Desulfovibrio salexigens).